A 318-amino-acid chain; its full sequence is Pantothenate kinase (318 aa).

ATP is bound at residue 96 to 103 (GSVAVGKS).

This sequence belongs to the prokaryotic pantothenate kinase family.

It is found in the cytoplasm. It catalyses the reaction (R)-pantothenate + ATP = (R)-4'-phosphopantothenate + ADP + H(+). The protein operates within cofactor biosynthesis; coenzyme A biosynthesis; CoA from (R)-pantothenate: step 1/5. The protein is Pantothenate kinase of Coxiella burnetii (strain Dugway 5J108-111).